We begin with the raw amino-acid sequence, 186 residues long: UPF0301 protein APL_0232 (186 aa).

This sequence belongs to the UPF0301 (AlgH) family.

This Actinobacillus pleuropneumoniae serotype 5b (strain L20) protein is UPF0301 protein APL_0232.